A 507-amino-acid polypeptide reads, in one-letter code: L-threonine dehydratase biosynthetic IlvA (507 aa).

Residue Lys-52 is modified to N6-(pyridoxal phosphate)lysine. Pyridoxal 5'-phosphate contacts are provided by residues Asn-79, 182 to 186 (GGGGL), and Ser-309. ACT-like domains are found at residues 333 to 404 (AVFA…DLTH) and 427 to 498 (RLFR…EESA).

This sequence belongs to the serine/threonine dehydratase family. In terms of assembly, homotetramer. It depends on pyridoxal 5'-phosphate as a cofactor.

The enzyme catalyses L-threonine = 2-oxobutanoate + NH4(+). It participates in amino-acid biosynthesis; L-isoleucine biosynthesis; 2-oxobutanoate from L-threonine: step 1/1. Its function is as follows. Catalyzes the anaerobic formation of alpha-ketobutyrate and ammonia from threonine in a two-step reaction. The first step involved a dehydration of threonine and a production of enamine intermediates (aminocrotonate), which tautomerizes to its imine form (iminobutyrate). Both intermediates are unstable and short-lived. The second step is the nonenzymatic hydrolysis of the enamine/imine intermediates to form 2-ketobutyrate and free ammonia. In the low water environment of the cell, the second step is accelerated by RidA. The protein is L-threonine dehydratase biosynthetic IlvA (ilvA) of Burkholderia multivorans (strain ATCC 17616 / 249).